The chain runs to 594 residues: Membrane protein insertase YidC (594 aa).

A helical membrane pass occupies residues 7 to 27 (YFVAIALSVLILIAWQFFYVS). Positions 36-73 (AAEQAQQAQQTQQQPGAQPAAPGQALPGGAIPSAGESR) are disordered. The segment covering 37-65 (AEQAQQAQQTQQQPGAQPAAPGQALPGGA) has biased composition (low complexity). 4 helical membrane-spanning segments follow: residues 369–389 (LFGN…LIFF), 443–463 (WPIL…YVTI), 488–508 (LFGL…WPII), and 532–552 (FTWM…GLVI).

This sequence belongs to the OXA1/ALB3/YidC family. Type 1 subfamily. In terms of assembly, interacts with the Sec translocase complex via SecD. Specifically interacts with transmembrane segments of nascent integral membrane proteins during membrane integration.

The protein localises to the cell inner membrane. Functionally, required for the insertion and/or proper folding and/or complex formation of integral membrane proteins into the membrane. Involved in integration of membrane proteins that insert both dependently and independently of the Sec translocase complex, as well as at least some lipoproteins. Aids folding of multispanning membrane proteins. The sequence is that of Membrane protein insertase YidC from Rhizobium meliloti (strain 1021) (Ensifer meliloti).